The chain runs to 225 residues: Mitochondrial inner membrane protease ATP23 (225 aa).

Residue H124 coordinates a divalent metal cation. The active site involves E125. Residue H128 coordinates a divalent metal cation.

Belongs to the peptidase M76 family.

It is found in the mitochondrion inner membrane. In terms of biological role, has a dual role in the assembly of mitochondrial ATPase. Acts as a protease that removes N-terminal residues of mitochondrial ATPase CF(0) subunit 6 at the intermembrane space side. Also involved in the correct assembly of the membrane-embedded ATPase CF(0) particle, probably mediating association of subunit 6 with the subunit 9 ring. This Candida glabrata (strain ATCC 2001 / BCRC 20586 / JCM 3761 / NBRC 0622 / NRRL Y-65 / CBS 138) (Yeast) protein is Mitochondrial inner membrane protease ATP23 (ATP23).